The following is a 182-amino-acid chain: ADP-ribosylation factor 1 (182 aa).

Gly2 carries N-myristoyl glycine lipidation. Residues 24-31 (GLDNAGKT), 67-71 (DLGGQ), and 126-129 (NKQD) each bind GTP.

It belongs to the small GTPase superfamily. Arf family.

It localises to the golgi apparatus. The enzyme catalyses GTP + H2O = GDP + phosphate + H(+). GTP-binding protein involved in protein trafficking; may modulate vesicle budding and uncoating within the Golgi apparatus. This is ADP-ribosylation factor 1 (ARF1) from Brassica rapa subsp. pekinensis (Chinese cabbage).